The chain runs to 318 residues: DNA primase small subunit PriS (318 aa).

Catalysis depends on residues Asp-95, Asp-97, and Asp-224.

Belongs to the eukaryotic-type primase small subunit family. In terms of assembly, heterodimer of a small subunit (PriS) and a large subunit (PriL). It depends on Mg(2+) as a cofactor. Mn(2+) serves as cofactor.

Functionally, catalytic subunit of DNA primase, an RNA polymerase that catalyzes the synthesis of short RNA molecules used as primers for DNA polymerase during DNA replication. The small subunit contains the primase catalytic core and has DNA synthesis activity on its own. Binding to the large subunit stabilizes and modulates the activity, increasing the rate of DNA synthesis while decreasing the length of the DNA fragments, and conferring RNA synthesis capability. The DNA polymerase activity may enable DNA primase to also catalyze primer extension after primer synthesis. May also play a role in DNA repair. The chain is DNA primase small subunit PriS from Sulfurisphaera tokodaii (strain DSM 16993 / JCM 10545 / NBRC 100140 / 7) (Sulfolobus tokodaii).